The chain runs to 573 residues: Potassium-transporting ATPase potassium-binding subunit (573 aa).

A run of 10 helical transmembrane segments spans residues 6 to 26 (ILFALFIVTIALITKPLGSYI), 66 to 86 (FFSLVSFSVMAFIFVLVILLL), 135 to 155 (ALAVQNFVSAAVGLCVAIALI), 177 to 197 (VFWILLPISIVIAIVYIFQGV), 257 to 277 (IQMVSIFAIAAALTYTFGKWV), 283 to 303 (GWLIFGVMLVLFIISLVVMTI), 382 to 402 (IFGGVGAGFYGFFMFLMLAVF), 428 to 448 (MFALLISPCCVLVFTGLAAVI), 493 to 513 (ITIALSMLIGRFGVIFAVIML), and 537 to 557 (FIFAILVFFTILLIGGLTIFP).

The protein belongs to the KdpA family. As to quaternary structure, the system is composed of three essential subunits: KdpA, KdpB and KdpC.

It is found in the cell inner membrane. Part of the high-affinity ATP-driven potassium transport (or Kdp) system, which catalyzes the hydrolysis of ATP coupled with the electrogenic transport of potassium into the cytoplasm. This subunit binds the periplasmic potassium ions and delivers the ions to the membrane domain of KdpB through an intramembrane tunnel. The sequence is that of Potassium-transporting ATPase potassium-binding subunit from Francisella tularensis subsp. mediasiatica (strain FSC147).